The sequence spans 161 residues: Protein ZMO0507 (161 aa).

This sequence belongs to the free Met sulfoxide reductase family.

The polypeptide is Protein ZMO0507 (Zymomonas mobilis subsp. mobilis (strain ATCC 31821 / ZM4 / CP4)).